The sequence spans 81 residues: Short neurotoxin 1 (81 aa).

Positions 1–21 (MKTLLLTLVVVTIVCLDLGYT) are cleaved as a signal peptide. Intrachain disulfides connect C24–C43, C38–C60, C62–C73, and C74–C79.

This sequence belongs to the three-finger toxin family. Short-chain subfamily. Type I alpha-neurotoxin sub-subfamily. As to expression, expressed by the venom gland.

It is found in the secreted. Its function is as follows. Binds to muscle nicotinic acetylcholine receptor (nAChR) and inhibit acetylcholine from binding to the receptor, thereby impairing neuromuscular transmission. The protein is Short neurotoxin 1 of Cryptophis nigrescens (Eastern small-eyed snake).